Reading from the N-terminus, the 301-residue chain is Transmembrane protein 178A (301 aa).

Positions 1–25 (MEKRALVTAISLSMSLLALMLLVTA) are cleaved as a signal peptide. Residues 26 to 183 (IFTDHWYETD…LLHLRRITAG (158 aa)) lie on the Extracellular side of the membrane. Asn162 is a glycosylation site (N-linked (GlcNAc...) asparagine). Residues 184-204 (FLGMAAAVMLCGSIVAAVGFF) traverse the membrane as a helical segment. The Cytoplasmic segment spans residues 205–215 (WEESLTQHVSG). Residues 216-236 (LLFLMAGIFCTISLCTYAASV) traverse the membrane as a helical segment. At 237–258 (SYDLSRNPPFIYGLPSDVDHGY) the chain is on the extracellular side. The helical transmembrane segment at 259–279 (GWSIFCAWVSLGLTVASGCIC) threads the bilayer. At 280–301 (TTYPFLSRTKALRSKTARESSV) the chain is on the cytoplasmic side.

It belongs to the TMEM178 family.

The protein resides in the endoplasmic reticulum membrane. In terms of biological role, may act as a negative regulator of osteoclast differentiation. In Danio rerio (Zebrafish), this protein is Transmembrane protein 178A (tmem178a).